Here is an 89-residue protein sequence, read N- to C-terminus: Small ribosomal subunit protein uS15 (89 aa).

It belongs to the universal ribosomal protein uS15 family. In terms of assembly, part of the 30S ribosomal subunit. Forms a bridge to the 50S subunit in the 70S ribosome, contacting the 23S rRNA.

Its function is as follows. One of the primary rRNA binding proteins, it binds directly to 16S rRNA where it helps nucleate assembly of the platform of the 30S subunit by binding and bridging several RNA helices of the 16S rRNA. In terms of biological role, forms an intersubunit bridge (bridge B4) with the 23S rRNA of the 50S subunit in the ribosome. The chain is Small ribosomal subunit protein uS15 from Synechococcus elongatus (strain ATCC 33912 / PCC 7942 / FACHB-805) (Anacystis nidulans R2).